Reading from the N-terminus, the 375-residue chain is Aminomethyltransferase (375 aa).

This sequence belongs to the GcvT family. The glycine cleavage system is composed of four proteins: P, T, L and H.

The catalysed reaction is N(6)-[(R)-S(8)-aminomethyldihydrolipoyl]-L-lysyl-[protein] + (6S)-5,6,7,8-tetrahydrofolate = N(6)-[(R)-dihydrolipoyl]-L-lysyl-[protein] + (6R)-5,10-methylene-5,6,7,8-tetrahydrofolate + NH4(+). Its function is as follows. The glycine cleavage system catalyzes the degradation of glycine. The sequence is that of Aminomethyltransferase from Ralstonia pickettii (strain 12J).